The following is a 316-amino-acid chain: Beta-lactamase 3 (316 aa).

The first 29 residues, 1 to 29 (MFVLNKFFTNSHYKKIVPVVLLSCATLIG), serve as a signal peptide directing secretion. Residue cysteine 30 is the site of N-palmitoyl cysteine attachment. The S-diacylglycerol cysteine moiety is linked to residue cysteine 30. Residues 34-53 (NTQSESNKQTNQTNQVKQEN) form a disordered region. The segment covering 40–50 (NKQTNQTNQVK) has biased composition (low complexity). The active-site Acyl-ester intermediate is the serine 95. The Proton acceptor role is filled by glutamate 191. 257-259 (KTG) contacts substrate.

This sequence belongs to the class-A beta-lactamase family.

Its subcellular location is the cell membrane. It catalyses the reaction a beta-lactam + H2O = a substituted beta-amino acid. The chain is Beta-lactamase 3 (blaZ) from Bacillus cereus.